The chain runs to 90 residues: Inner kinetochore subunit MHF1 (90 aa).

The protein belongs to the TAF9 family. CENP-S/MHF1 subfamily. In terms of assembly, the MHF histone-fold complex is a heterotetramer of 2 MHF1-MHF2 heterodimers. Together with MPH1/FANCM, forms the FANCM-MHF complex. Component of the inner kinetochore constitutive centromere-associated network (CCAN) (also known as central kinetochore CTF19 complex in yeast), which is composed of at least AME1, CHL4, CNN1, CTF3, CTF19, IML3, MCM16, MCM21, MCM22, MHF1, MHF2, MIF2, NKP1, NKP2, OKP1 and WIP1.

In terms of biological role, dsDNA-binding component of a FANCM-MHF complex involved in DNA damage repair and genome maintenance. FANCM-MHF promotes gene conversion at blocked replication forks, probably by reversal of the stalled fork. Component of the kinetochore, a multiprotein complex that assembles on centromeric DNA and attaches chromosomes to spindle microtubules, mediating chromosome segregation and sister chromatid segregation during meiosis and mitosis. Component of the inner kinetochore constitutive centromere-associated network (CCAN), which serves as a structural platform for outer kinetochore assembly. This Saccharomyces cerevisiae (strain ATCC 204508 / S288c) (Baker's yeast) protein is Inner kinetochore subunit MHF1.